A 558-amino-acid chain; its full sequence is Pre-mRNA-processing factor 17 (558 aa).

2 disordered regions span residues 1–23 and 117–197; these read MLVA…NIQP and DDNE…GQNE. Positions 126 to 141 are enriched in basic and acidic residues; it reads DLKRKSQKIKERREDP. A compositionally biased stretch (low complexity) spans 162-171; it reads SEQSSSPLEY. A compositionally biased stretch (basic and acidic residues) spans 180–189; the sequence is LDVKSEKDTE. 7 WD repeats span residues 264–304, 308–349, 351–391, 394–433, 437–476, 484–523, and 526–558; these read GHTK…SLLR, GHAR…NCFN, DRLT…IVQA, HHLG…PIKF, IAMH…RQNK, SCSG…LMAK, and AHSG…KYWD.

In terms of assembly, belongs to the 40S cdc5-associated complex (or cwf complex), a spliceosome sub-complex reminiscent of a late-stage spliceosome composed of the U2, U5 and U6 snRNAs and at least brr2, cdc5, cwf2/prp3, cwf3/syf1, cwf4/syf3, cwf5/ecm2, spp42/cwf6, cwf7/spf27, cwf8, cwf9, cwf10, cwf11, cwf12, prp45/cwf13, cwf14, cwf15, cwf16, cwf17, cwf18, cwf19, cwf20, cwf21, cwf22, cwf23, cwf24, cwf25, cwf26, cyp7/cwf27, cwf28, cwf29/ist3, lea1, msl1, prp5/cwf1, prp10, prp12/sap130, prp17, prp22, sap61, sap62, sap114, sap145, slu7, smb1, smd1, smd3, smf1, smg1 and syf2.

Its subcellular location is the nucleus. Its function is as follows. Functions in the second step of pre-mRNA splicing. Involved in splicing intron which are longer than 200 nucleotides. In Schizosaccharomyces pombe (strain 972 / ATCC 24843) (Fission yeast), this protein is Pre-mRNA-processing factor 17 (prp17).